The sequence spans 379 residues: Carbamoyl phosphate synthase small chain (379 aa).

The segment at 1-189 is CPSase; that stretch reads MSKLALLVLE…GLPEAKDDSE (189 aa). 3 residues coordinate L-glutamine: Ser47, Gly241, and Gly243. The Glutamine amidotransferase type-1 domain occupies 193–379; that stretch reads HVVAYDFGAK…FIELIKKHSA (187 aa). Cys269 acts as the Nucleophile in catalysis. Residues Leu270, Gln273, Asn311, Gly313, and Phe314 each coordinate L-glutamine. Residues His353 and Glu355 contribute to the active site.

Belongs to the CarA family. As to quaternary structure, composed of two chains; the small (or glutamine) chain promotes the hydrolysis of glutamine to ammonia, which is used by the large (or ammonia) chain to synthesize carbamoyl phosphate. Tetramer of heterodimers (alpha,beta)4.

It catalyses the reaction hydrogencarbonate + L-glutamine + 2 ATP + H2O = carbamoyl phosphate + L-glutamate + 2 ADP + phosphate + 2 H(+). It carries out the reaction L-glutamine + H2O = L-glutamate + NH4(+). The protein operates within amino-acid biosynthesis; L-arginine biosynthesis; carbamoyl phosphate from bicarbonate: step 1/1. It functions in the pathway pyrimidine metabolism; UMP biosynthesis via de novo pathway; (S)-dihydroorotate from bicarbonate: step 1/3. Small subunit of the glutamine-dependent carbamoyl phosphate synthetase (CPSase). CPSase catalyzes the formation of carbamoyl phosphate from the ammonia moiety of glutamine, carbonate, and phosphate donated by ATP, constituting the first step of 2 biosynthetic pathways, one leading to arginine and/or urea and the other to pyrimidine nucleotides. The small subunit (glutamine amidotransferase) binds and cleaves glutamine to supply the large subunit with the substrate ammonia. The sequence is that of Carbamoyl phosphate synthase small chain from Vibrio parahaemolyticus serotype O3:K6 (strain RIMD 2210633).